A 233-amino-acid polypeptide reads, in one-letter code: Small ribosomal subunit protein uS3 (233 aa).

A KH type-2 domain is found at valine 39–arginine 107. The disordered stretch occupies residues valine 214 to lysine 233.

It belongs to the universal ribosomal protein uS3 family. Part of the 30S ribosomal subunit. Forms a tight complex with proteins S10 and S14.

Functionally, binds the lower part of the 30S subunit head. Binds mRNA in the 70S ribosome, positioning it for translation. This is Small ribosomal subunit protein uS3 from Pectobacterium atrosepticum (strain SCRI 1043 / ATCC BAA-672) (Erwinia carotovora subsp. atroseptica).